The primary structure comprises 197 residues: Ribosome maturation factor RimP (197 aa).

It belongs to the RimP family.

The protein localises to the cytoplasm. Its function is as follows. Required for maturation of 30S ribosomal subunits. This is Ribosome maturation factor RimP from Acidovorax ebreus (strain TPSY) (Diaphorobacter sp. (strain TPSY)).